A 230-amino-acid chain; its full sequence is Phosphatidate cytidylyltransferase (230 aa).

The next 6 membrane-spanning stretches (helical) occupy residues 33-53 (FVIA…LVGT), 67-87 (IPDL…LIFL), 95-115 (WLIM…MIGG), 133-153 (WSGL…VSFI), 167-187 (IYLF…DLFI), and 206-226 (HGGV…LFLM).

The protein belongs to the CDS family.

Its subcellular location is the cell membrane. It carries out the reaction a 1,2-diacyl-sn-glycero-3-phosphate + CTP + H(+) = a CDP-1,2-diacyl-sn-glycerol + diphosphate. It participates in phospholipid metabolism; CDP-diacylglycerol biosynthesis; CDP-diacylglycerol from sn-glycerol 3-phosphate: step 3/3. The polypeptide is Phosphatidate cytidylyltransferase (cdsA) (Rickettsia conorii (strain ATCC VR-613 / Malish 7)).